Consider the following 339-residue polypeptide: 2,3,4,5-tetrahydropyridine-2,6-dicarboxylate N-succinyltransferase (339 aa).

Aspartate 180 lines the Mg(2+) pocket. Glutamate 213 (acyl-anhydride intermediate) is an active-site residue. Succinyl-CoA is bound by residues arginine 215, glycine 230, serine 233, alanine 256, glutamate 271–alanine 272, glycine 279, and lysine 300.

It belongs to the type 2 tetrahydrodipicolinate N-succinyltransferase family. Homotrimer.

Its subcellular location is the cytoplasm. It catalyses the reaction (S)-2,3,4,5-tetrahydrodipicolinate + succinyl-CoA + H2O = (S)-2-succinylamino-6-oxoheptanedioate + CoA. The protein operates within amino-acid biosynthesis; L-lysine biosynthesis via DAP pathway; LL-2,6-diaminopimelate from (S)-tetrahydrodipicolinate (succinylase route): step 1/3. Catalyzes the conversion of the cyclic tetrahydrodipicolinate (THDP) into the acyclic N-succinyl-L-2-amino-6-oxopimelate using succinyl-CoA. The chain is 2,3,4,5-tetrahydropyridine-2,6-dicarboxylate N-succinyltransferase from Bifidobacterium longum (strain NCC 2705).